The sequence spans 136 residues: Large ribosomal subunit protein uL16 (136 aa).

Belongs to the universal ribosomal protein uL16 family. Part of the 50S ribosomal subunit.

Its function is as follows. Binds 23S rRNA and is also seen to make contacts with the A and possibly P site tRNAs. This chain is Large ribosomal subunit protein uL16, found in Sodalis glossinidius (strain morsitans).